Reading from the N-terminus, the 235-residue chain is Large ribosomal subunit protein uL1 (235 aa).

This sequence belongs to the universal ribosomal protein uL1 family. As to quaternary structure, part of the 50S ribosomal subunit.

In terms of biological role, binds directly to 23S rRNA. The L1 stalk is quite mobile in the ribosome, and is involved in E site tRNA release. Protein L1 is also a translational repressor protein, it controls the translation of the L11 operon by binding to its mRNA. This is Large ribosomal subunit protein uL1 from Mycobacterium tuberculosis (strain ATCC 25177 / H37Ra).